A 311-amino-acid polypeptide reads, in one-letter code: Olfactory receptor 10G8 (311 aa).

Residues 1 to 23 are Extracellular-facing; that stretch reads MSNASLLTAFILMGLPHAPALDA. An N-linked (GlcNAc...) asparagine glycan is attached at Asn-3. Residues 24 to 44 form a helical membrane-spanning segment; that stretch reads PLFGVFLVVYVLTVLGNLLIL. Residues 45–52 are Cytoplasmic-facing; sequence LVIRVDSH. Residues 53–73 traverse the membrane as a helical segment; that stretch reads LHTTMYYFLTNLSFIDMWFST. Over 74–98 the chain is Extracellular; that stretch reads VTVPKLLMTLVFPSGRAISFHSCMA. Cysteines 96 and 188 form a disulfide. A helical membrane pass occupies residues 99–119; that stretch reads QLYFFHFLGGTECFLYRVMSC. Topologically, residues 120 to 138 are cytoplasmic; the sequence is DRYLAISYPLRYTSMMTGR. The helical transmembrane segment at 139–159 threads the bilayer; that stretch reads SCTLLATSTWLSGSLHSAVQA. At 160–196 the chain is on the extracellular side; sequence ILTFHLPYCGPNWIQHYLCDAPPILKLACADTSAIET. The chain crosses the membrane as a helical span at residues 197–216; that stretch reads VIFVTVGIVASGCFVLIVLS. Residues 217 to 236 lie on the Cytoplasmic side of the membrane; the sequence is YVSIVCSILRIRTSEGKHRA. Residues 237 to 257 form a helical membrane-spanning segment; sequence FQTCASHCIVVLCFFGPGLFI. The Extracellular segment spans residues 258–268; that stretch reads YLRPGSRKAVD. Residues 269–289 form a helical membrane-spanning segment; the sequence is GVVAVFYTVLTPLLNPVVYTL. Residues 290–311 are Cytoplasmic-facing; it reads RNKEVKKALLKLKDKVAHSQSK.

The protein belongs to the G-protein coupled receptor 1 family.

Its subcellular location is the cell membrane. In terms of biological role, odorant receptor. The sequence is that of Olfactory receptor 10G8 (OR10G8) from Homo sapiens (Human).